An 876-amino-acid polypeptide reads, in one-letter code: Leucine--tRNA ligase (876 aa).

Positions 43 to 53 match the 'HIGH' region motif; sequence PYPSGRIHMGH. The 'KMSKS' region signature appears at 632 to 636; sequence KMSKS. Lysine 635 contributes to the ATP binding site.

The protein belongs to the class-I aminoacyl-tRNA synthetase family.

It is found in the cytoplasm. It carries out the reaction tRNA(Leu) + L-leucine + ATP = L-leucyl-tRNA(Leu) + AMP + diphosphate. The chain is Leucine--tRNA ligase from Rhizobium etli (strain CIAT 652).